The sequence spans 655 residues: Probable potassium transport system protein Kup (655 aa).

12 helical membrane passes run 19–39, 42–62, 102–122, 132–152, 161–181, 214–234, 246–266, 282–302, 338–358, 370–390, 395–415, and 420–440; these read GLLISLGIIYGDIGTSPLYVM, IAGGNVISENLILGGLSCVFW, VWPAMIGGAAMLADGIITPPI, LIFNKDIPTIPIVLAIIVMLF, IVGKFFGPIMFIWFAMLATLG, SGFWLLGAVFLCTTGAEALYS, ISWIFVKLALLINYFGQGAWI, IMPEWFIVYGIIIATMAAIIA, LFIPSINLLLLAGCIFVVLWF, LAINITFLMTTILLAYYLLII, FIWVGLLILMYLIIEVSFLVA, and FFHGGYFTLISSGILAFIMII.

This sequence belongs to the HAK/KUP transporter (TC 2.A.72) family.

It localises to the cell inner membrane. It catalyses the reaction K(+)(in) + H(+)(in) = K(+)(out) + H(+)(out). In terms of biological role, transport of potassium into the cell. Likely operates as a K(+):H(+) symporter. In Cytophaga hutchinsonii (strain ATCC 33406 / DSM 1761 / CIP 103989 / NBRC 15051 / NCIMB 9469 / D465), this protein is Probable potassium transport system protein Kup.